We begin with the raw amino-acid sequence, 881 residues long: Alanine--tRNA ligase (881 aa).

Residues His-564, His-568, Cys-673, and His-677 each contribute to the Zn(2+) site. The tract at residues Gly-848–Lys-867 is disordered.

This sequence belongs to the class-II aminoacyl-tRNA synthetase family. Zn(2+) is required as a cofactor.

It localises to the cytoplasm. The catalysed reaction is tRNA(Ala) + L-alanine + ATP = L-alanyl-tRNA(Ala) + AMP + diphosphate. Catalyzes the attachment of alanine to tRNA(Ala) in a two-step reaction: alanine is first activated by ATP to form Ala-AMP and then transferred to the acceptor end of tRNA(Ala). Also edits incorrectly charged Ser-tRNA(Ala) and Gly-tRNA(Ala) via its editing domain. This Hyphomonas neptunium (strain ATCC 15444) protein is Alanine--tRNA ligase.